The sequence spans 705 residues: Voltage-dependent calcium channel beta subunit-associated regulatory protein (705 aa).

Over methionine 1–tyrosine 45 the chain is Extracellular. N-linked (GlcNAc...) asparagine glycosylation is present at asparagine 29. Residues valine 46–valine 66 traverse the membrane as a helical; Signal-anchor for type III membrane protein segment. The Cytoplasmic portion of the chain corresponds to leucine 67–alanine 705. Disordered regions lie at residues threonine 91–glutamate 113 and glycine 212–alanine 284. Over residues proline 245–glycine 254 the composition is skewed to polar residues. The span at glycine 267–alanine 284 shows a compositional bias: gly residues. A phosphoserine mark is found at serine 299 and serine 304. Disordered regions lie at residues proline 316–glutamine 353, phenylalanine 369–aspartate 436, alanine 448–tyrosine 540, and histidine 559–serine 655. Positions threonine 344–glutamine 353 are enriched in acidic residues. Residues histidine 371–alanine 382 are compositionally biased toward pro residues. Residues leucine 383–proline 397 are compositionally biased toward low complexity. Over residues alanine 479–proline 488 the composition is skewed to pro residues. Positions arginine 489–leucine 499 are enriched in basic and acidic residues. Phosphoserine is present on residues serine 507 and serine 528. Residues alanine 567–arginine 585 are compositionally biased toward basic residues. A compositionally biased stretch (low complexity) spans glycine 591 to alanine 614. The residue at position 621 (serine 621) is a Phosphoserine. Threonine 698 is modified (phosphothreonine). A phosphoserine mark is found at serine 699 and serine 703.

As to quaternary structure, interacts with voltage-dependent calcium channels CACNB1, CACNB2, CACNB3 and CACNB4 beta subunits; prevents their interaction with the CACNA1C alpha subunit thereby negatively regulating the activity of the corresponding calcium channels.

It is found in the cytoplasmic vesicle. The protein localises to the secretory vesicle. It localises to the synaptic vesicle membrane. Its subcellular location is the cell membrane. The protein resides in the cell projection. It is found in the growth cone. Its function is as follows. Negatively regulates voltage-gated calcium channels by preventing the interaction between their alpha and beta subunits. Thereby, negatively regulates calcium channels activity at the plasma membrane and indirectly inhibits calcium-regulated exocytosis. In Homo sapiens (Human), this protein is Voltage-dependent calcium channel beta subunit-associated regulatory protein.